The primary structure comprises 290 residues: PIH1 domain-containing protein 1 (290 aa).

Over residues glutamate 34–proline 50 the composition is skewed to polar residues. The interval glutamate 34–glycine 53 is disordered. Serine 173 bears the Phosphoserine mark.

It belongs to the PIH1 family. In terms of assembly, component of the R2TP complex composed at least of RUVBL1, RUVBL2, RPAP3 and PIHD1. Component of the PAQosome complex which is responsible for the biogenesis of several protein complexes and which consists of R2TP complex members RUVBL1, RUVBL2, RPAP3 and PIH1D1, URI complex members PFDN2, PFDN6, PDRG1, UXT and URI1 as well as ASDURF, POLR2E and DNAAF10/WDR92. Interacts with phosphorylated TELO2 and mediates interaction of TELO2 with the R2TP complex. Interacts with phosphorylated ECD, EFTUD2/SNRP116, RPB1 and UBR5 and with RPB1 in a phosphorylation-independent manner. Interacts with the core C/D box snoRNP particle components NOP58 and FBL and with RUVBL1/TIP49. Interacts with RPAP3 and DNAAF10. Interacts with histone H4 and with SWI/SNF complex member SMARCB1/SNF5. Interacts with the mTORC1 complex member RPTOR. Interacts with MSL1.

It localises to the nucleus. Its function is as follows. Involved in the assembly of C/D box small nucleolar ribonucleoprotein (snoRNP) particles. Recruits the SWI/SNF complex to the core promoter of rRNA genes and enhances pre-rRNA transcription. Mediates interaction of TELO2 with the R2TP complex which is necessary for the stability of MTOR and SMG1. Positively regulates the assembly and activity of the mTORC1 complex. This chain is PIH1 domain-containing protein 1 (PIH1D1), found in Bos taurus (Bovine).